We begin with the raw amino-acid sequence, 807 residues long: Glycerol-3-phosphate acyltransferase (807 aa).

Residues 308–313 (CHRSHM) carry the HXXXXD motif motif.

This sequence belongs to the GPAT/DAPAT family.

It is found in the cell inner membrane. The enzyme catalyses sn-glycerol 3-phosphate + an acyl-CoA = a 1-acyl-sn-glycero-3-phosphate + CoA. The protein operates within phospholipid metabolism; CDP-diacylglycerol biosynthesis; CDP-diacylglycerol from sn-glycerol 3-phosphate: step 1/3. The sequence is that of Glycerol-3-phosphate acyltransferase from Shewanella sp. (strain MR-7).